The primary structure comprises 585 residues: Testis-specific serine kinase substrate (585 aa).

The span at glutamate 91–alanine 108 shows a compositional bias: low complexity. Residues glutamate 91 to proline 125 are disordered. A Phosphoserine modification is found at serine 224. Disordered regions lie at residues histidine 264–glutamate 312 and leucine 559–glutamine 585. Phosphoserine; by TSSK1 and TSSK2 is present on serine 281. Serine 309 bears the Phosphoserine mark.

Post-translationally, phosphorylated on serine residue(s) by STK22A/TSSK1 and STK22B/TSSK2. In terms of tissue distribution, testis specific.

Its subcellular location is the cytoplasm. The protein localises to the cytoskeleton. It is found in the microtubule organizing center. It localises to the centrosome. The protein resides in the centriole. Its subcellular location is the cytoplasmic vesicle. The protein localises to the secretory vesicle. It is found in the acrosome. Functionally, may play a role in testicular physiology, most probably in the process of spermatogenesis or spermatid development. This is Testis-specific serine kinase substrate (Tsks) from Mus musculus (Mouse).